A 448-amino-acid chain; its full sequence is Phosphoglucosamine mutase (448 aa).

The active-site Phosphoserine intermediate is the serine 100. Residues serine 100, aspartate 240, aspartate 242, and aspartate 244 each coordinate Mg(2+). Serine 100 is modified (phosphoserine).

This sequence belongs to the phosphohexose mutase family. In terms of assembly, homodimer, may form a complex with CdaA. Requires Mg(2+) as cofactor. In terms of processing, activated by phosphorylation.

It carries out the reaction alpha-D-glucosamine 1-phosphate = D-glucosamine 6-phosphate. Functionally, catalyzes the conversion of glucosamine-6-phosphate to glucosamine-1-phosphate. Glucosamine-1-phosphate is used for cell wall biosynthesis. The protein is Phosphoglucosamine mutase of Bacillus subtilis (strain 168).